The following is a 586-amino-acid chain: Regulatory protein NPR3 (586 aa).

Ser10 is subject to Phosphoserine. The BTB domain occupies 60–135 (SDAEIIVDGV…IYTGRLKPFP (76 aa)). The C2HC NPR-type zinc-finger motif lies at 138–152 (VSTCVDPVCSHDCCR). Zn(2+) is bound by residues Cys141, Cys146, His148, and Cys151. ANK repeat units follow at residues 261 to 291 (ERIGKILKALDSDDVELVKLLLTESDITLDQ), 293 to 320 (NGLHYSVVYSDPKVVAEILALDMGDVNY), and 324 to 353 (RGYTVLHFAAMRREPSIIISLIDKGANASE). Residues 383 to 523 (ESSKARLCID…MAEYIDDDIL (141 aa)) are salicylic acid-binding core (SBC). Position 428 (Arg428) interacts with salicylate. Residues 554-586 (YSKDKESKIARSCLSASSSPSSSSIRDDLHNTT) are disordered. Over residues 565-577 (SCLSASSSPSSSS) the composition is skewed to low complexity.

It belongs to the plant 'ANKYRIN-BTB/POZ' family. 'NPR1-like' subfamily. As to quaternary structure, forms homodimers and heterodimers with NPR4 in the presence of salicylic acid (SA). Interacts with TGA2, TGA3, TGA5 and TGA6. Interacts with CUL3A, a core component of the cullin-RING ubiquitin ligases (CRL). Interacts with TGA2 in vivo in the nucleus. Binds to NPR1; this interaction is promoted by association with SA, probably due to conformational changes.

The protein localises to the nucleus. It participates in protein modification; protein ubiquitination. Functionally, salicylic acid (SA)-binding substrate-specific adapter of an E3 ubiquitin-protein ligase complex (CUL3-RBX1-BTB) which mediates the ubiquitination and subsequent proteasomal degradation of NPR1 in response to SA. Together with NPR4, acts as receptor of salicylic acid to monitor immunity in a NPR1-dependent manner and induce systemic acquired resistance (SAR). Involved in the regulation of basal defense responses against pathogens, and may be implicated in the cross-talk between the SA- and JA-dependent signaling pathways. The polypeptide is Regulatory protein NPR3 (Arabidopsis thaliana (Mouse-ear cress)).